The following is a 208-amino-acid chain: AN1-type zinc finger protein 6 (208 aa).

An A20-type zinc finger spans residues Ser-8–Asn-42. Zn(2+)-binding residues include Cys-14, Cys-18, Cys-30, and Cys-33. The span at Gln-41–Asp-68 shows a compositional bias: polar residues. Positions Gln-41–Glu-140 are disordered. Ser-49 carries the post-translational modification Phosphoserine. Residues Ser-80–Ser-94 are compositionally biased toward low complexity. Polar residues-rich tracts occupy residues Leu-95 to Val-110 and Val-120 to Glu-133. An AN1-type zinc finger spans residues Lys-143–Ala-189. Zn(2+) contacts are provided by Cys-149, Cys-152, Cys-163, Cys-165, Cys-170, His-173, His-179, and Cys-181. N6-acetyllysine is present on Lys-204.

In terms of assembly, interacts with PKN1. Interacts with TRAF2. Interacts with mono- and polyubiquitin. Interacts with PEX6. Interacts with PEX5 (Cys-linked ubiquitinated). In terms of tissue distribution, widely expressed with high level in heart, skeletal muscle, liver, kidney and placenta.

It localises to the cytoplasm. Its function is as follows. Involved in regulation of TNF-alpha induced NF-kappa-B activation and apoptosis. Involved in modulation of 'Lys-48'-linked polyubiquitination status of TRAF2 and decreases association of TRAF2 with RIPK1. Required for PTS1 target sequence-dependent protein import into peroxisomes and PEX5 stability; may cooperate with PEX6. In vitro involved in PEX5 export from the cytosol to peroxisomes. The chain is AN1-type zinc finger protein 6 (ZFAND6) from Homo sapiens (Human).